Here is a 146-residue protein sequence, read N- to C-terminus: Hemoglobin subunit beta (146 aa).

Positions 2-146 constitute a Globin domain; sequence PFSAHEEKLI…VAAALSAEYH (145 aa). Residues H63 and H92 each coordinate heme b.

This sequence belongs to the globin family. Heterotetramer of two alpha chains and two beta chains. In terms of tissue distribution, red blood cells.

Its function is as follows. Involved in oxygen transport from the lung to the various peripheral tissues. In Caiman crocodilus (Spectacled caiman), this protein is Hemoglobin subunit beta (HBB).